We begin with the raw amino-acid sequence, 349 residues long: N-acetyltaurine hydrolase (349 aa).

A divalent metal cation-binding residues include histidine 26, histidine 28, glutamate 169, histidine 201, histidine 230, and aspartate 298.

It belongs to the metallo-dependent hydrolases superfamily. Phosphotriesterase family. A divalent metal cation is required as a cofactor.

It is found in the cytoplasm. The protein localises to the cytosol. The enzyme catalyses N-acetyltaurine + H2O = taurine + acetate. It carries out the reaction N-propanoyltaurine + H2O = propanoate + taurine. The catalysed reaction is N-acetyl-L-methionine + H2O = L-methionine + acetate. It catalyses the reaction N-acetyl-L-isoleucine + H2O = L-isoleucine + acetate. The enzyme catalyses N-acetyl-L-leucine + H2O = L-leucine + acetate. It carries out the reaction N-acetyl-L-valine + H2O = L-valine + acetate. Functionally, N-acetyltaurine hydrolase that regulates feeding by catalyzing the hydrolysis of N-acetyltaurine into taurine and acetate. N-acetyltaurine has anorexigenic and anti-obesity effects that are dependent on GFRAL receptor and GDF15. PTER also acts on other N-acetyl amino acids (Met, Ile, Leu, Val) and N-propionyltaurine, but at lower rates. The polypeptide is N-acetyltaurine hydrolase (PTER) (Bos taurus (Bovine)).